The following is a 48-amino-acid chain: Glycine-rich RNA-binding protein 2 (48 aa).

The chain is Glycine-rich RNA-binding protein 2 from Populus euphratica (Euphrates poplar).